A 171-amino-acid chain; its full sequence is Large ribosomal subunit protein bL17 (171 aa).

The segment covering 140-152 (KREIQTKAREEKR) has biased composition (basic and acidic residues). Residues 140–171 (KREIQTKAREEKRATRKSNSAPVNKETTSKKK) are disordered. A compositionally biased stretch (polar residues) spans 156–165 (KSNSAPVNKE).

The protein belongs to the bacterial ribosomal protein bL17 family. In terms of assembly, part of the 50S ribosomal subunit. Contacts protein L32.

This is Large ribosomal subunit protein bL17 from Leptospira interrogans serogroup Icterohaemorrhagiae serovar Lai (strain 56601).